Reading from the N-terminus, the 280-residue chain is Ribulose-phosphate 3-epimerase, chloroplastic (280 aa).

A chloroplast-targeting transit peptide spans serine 1–alanine 45. Residue serine 62 coordinates substrate. Histidine 87, aspartate 89, and histidine 120 together coordinate a divalent metal cation. The active-site Proton acceptor is aspartate 89. Substrate is bound by residues histidine 120, glycine 198 to glycine 201, aspartate 231 to glycine 233, and glycine 253 to serine 254. Residue aspartate 231 participates in a divalent metal cation binding. Catalysis depends on aspartate 231, which acts as the Proton donor.

The protein belongs to the ribulose-phosphate 3-epimerase family. Homohexamer. The cofactor is Co(2+). Requires Fe(2+) as cofactor. Mn(2+) is required as a cofactor. Zn(2+) serves as cofactor. In terms of tissue distribution, highest level of expression in leaves, whereas it is low in roots, tubers, and stems.

It is found in the plastid. It localises to the chloroplast thylakoid membrane. The enzyme catalyses D-ribulose 5-phosphate = D-xylulose 5-phosphate. It participates in carbohydrate biosynthesis; Calvin cycle. In terms of biological role, catalyzes the reversible epimerization of D-ribulose 5-phosphate to D-xylulose 5-phosphate. In Solanum tuberosum (Potato), this protein is Ribulose-phosphate 3-epimerase, chloroplastic.